The following is a 396-amino-acid chain: Orotidine 5'-phosphate decarboxylase (396 aa).

Residues D46, 68–70, 103–112, Y346, and R365 contribute to the substrate site; these read KTH and DRKFVDIGST. K105 acts as the Proton donor in catalysis.

Belongs to the OMP decarboxylase family.

It catalyses the reaction orotidine 5'-phosphate + H(+) = UMP + CO2. Its pathway is pyrimidine metabolism; UMP biosynthesis via de novo pathway; UMP from orotate: step 2/2. The polypeptide is Orotidine 5'-phosphate decarboxylase (URA3) (Sordaria macrospora (strain ATCC MYA-333 / DSM 997 / K(L3346) / K-hell)).